The following is a 129-amino-acid chain: Small ribosomal subunit protein uS13m (129 aa).

A disordered region spans residues 92–129; the sequence is HQDGSPLRGQRTHTNARTARKQIRKGNERRLPKEQATD. Residues 116–129 show a composition bias toward basic and acidic residues; it reads KGNERRLPKEQATD.

It belongs to the universal ribosomal protein uS13 family. Part of the small ribosomal subunit.

It is found in the mitochondrion. In terms of biological role, located at the top of the head of the small subunit, it contacts several helices of the 18S rRNA. This chain is Small ribosomal subunit protein uS13m (RPS13), found in Zea mays (Maize).